The following is a 392-amino-acid chain: DNA-directed RNA polymerase subunit Rpo1C (392 aa).

This sequence belongs to the RNA polymerase beta' chain family. In terms of assembly, part of the RNA polymerase complex.

The protein localises to the cytoplasm. The enzyme catalyses RNA(n) + a ribonucleoside 5'-triphosphate = RNA(n+1) + diphosphate. Functionally, DNA-dependent RNA polymerase (RNAP) catalyzes the transcription of DNA into RNA using the four ribonucleoside triphosphates as substrates. Forms part of the jaw domain. This Saccharolobus islandicus (strain Y.N.15.51 / Yellowstone #2) (Sulfolobus islandicus) protein is DNA-directed RNA polymerase subunit Rpo1C.